The sequence spans 152 residues: Cytosolic calcium-binding protein 1 (152 aa).

7 repeat units span residues 57-62, 67-71, 78-82, 104-108, 112-116, 124-129, and 131-136. Positions 57-136 are 7 X 5 AA approximate repeats of V-E-E-K-K; that stretch reads VEETEKPIEE…EKKPEAEEEK (80 aa). The interval 60-152 is disordered; that stretch reads TEKPIEETEE…VTAPVEKADE (93 aa). The span at 96-138 shows a compositional bias: basic and acidic residues; the sequence is DESKTEEVVEAKKEEEVEEKKTEEAPVVVEEEKKPEAEEEKPA.

As to expression, predominantly expressed in petioles (at protein level). Mainly observed in shoots, flowers, siliques and roots, and, to a lower extent, in stems and leaves.

The protein resides in the cytoplasm. The protein localises to the cytosol. Its function is as follows. Binds calcium Ca(2+) and may act as a signal mediator to buffer Ca(2+). The chain is Cytosolic calcium-binding protein 1 from Arabidopsis thaliana (Mouse-ear cress).